A 368-amino-acid polypeptide reads, in one-letter code: F-box/kelch-repeat protein At5g51250 (368 aa).

Residues 1–44 (MSSLPDDLLLSIFARISRLYYPTLSLVSKSFRSLLASPDLYKAR) form the F-box domain. 3 Kelch repeats span residues 116–163 (DIYN…VLDR), 165–218 (IYVA…CIDG), and 260–304 (LFYI…YGGK).

This is F-box/kelch-repeat protein At5g51250 from Arabidopsis thaliana (Mouse-ear cress).